Consider the following 197-residue polypeptide: MCCVSWNWVLACTFLLIFLSWWNCCNDRISVNSGVPGMAARVAGAHHVVLTEQDELLRLLRVNLAANAEVLTHEIEEEKGGIVARPLSWGIEHTKEYLARYGDEKIDVILSCDCIYEPLYGTSWKGLAQTMELLCLANPKSVVLLAVERRNEDGIDKFLAFVEKETMLLYRRDEVTVGSSKNRLEVYHLHLENILKN.

The first 27 residues, methionine 1 to aspartate 27, serve as a signal peptide directing secretion. The RxLR-dEER signature appears at arginine 58–lysine 79.

The protein belongs to the RxLR effector family.

Its subcellular location is the secreted. It localises to the host nucleus. The protein resides in the host cytoplasm. In terms of biological role, secreted effector that completely suppresses the host cell death induced by cell death-inducing proteins. This Plasmopara viticola (Downy mildew of grapevine) protein is Secreted RxLR effector protein 48.